The sequence spans 423 residues: MSHNAFITEETIEPTDDGPLDGVTVAVKDNISTDGVRTTCGSEMLADYVPPYDATVVERLRDAGATIVGKTNMDEFGMGTTTETSAFGPTENPAAEGRVPGGSSGGSAAAVAAGDADLALGSDTGGSVRCPAAFCGVVGIKPTYGLVSRYGLVAYANSLEQIGPLAPTVEEAAELLDVIAGVDERDGTTREPPAGQPTYADAADGDVDGLTVGIPTELVDGADEGVRETFDDAVETLESAGATTQEVSLPSVETAVQAYYVIAMSEASSNLARFDGVRYGASGDEDGNWNESFAAAREAGFGEEVKRRILLGTYALSAGYHDKYYKQAQDARAWVKQDFDEAFESVDVLASPTMPVPPFERGESLEDPLKMYLADANTVPVNLANLPAISVPAGETADGPVGLQLVGPAFGEATLIRAGSALN.

The segment at 1–20 is disordered; it reads MSHNAFITEETIEPTDDGPL. Residues 10-19 show a composition bias toward acidic residues; sequence ETIEPTDDGP. Active-site charge relay system residues include Lys28 and Ser103. The interval 75 to 108 is disordered; sequence EFGMGTTTETSAFGPTENPAAEGRVPGGSSGGSA. Ser127 serves as the catalytic Acyl-ester intermediate. The tract at residues 183–206 is disordered; sequence DERDGTTREPPAGQPTYADAADGD.

The protein belongs to the amidase family. GatA subfamily. In terms of assembly, heterotrimer of A, B and C subunits.

It carries out the reaction L-glutamyl-tRNA(Gln) + L-glutamine + ATP + H2O = L-glutaminyl-tRNA(Gln) + L-glutamate + ADP + phosphate + H(+). Functionally, allows the formation of correctly charged Gln-tRNA(Gln) through the transamidation of misacylated Glu-tRNA(Gln) in organisms which lack glutaminyl-tRNA synthetase. The reaction takes place in the presence of glutamine and ATP through an activated gamma-phospho-Glu-tRNA(Gln). The chain is Glutamyl-tRNA(Gln) amidotransferase subunit A from Natronomonas pharaonis (strain ATCC 35678 / DSM 2160 / CIP 103997 / JCM 8858 / NBRC 14720 / NCIMB 2260 / Gabara) (Halobacterium pharaonis).